The sequence spans 716 residues: Lamin-like protein (716 aa).

Composition is skewed to basic residues over residues 1–10 (MDMSKKKSKR) and 35–45 (KKTKTTTKKKA). A disordered region spans residues 1-107 (MDMSKKKSKR…TIQSIPTTPI (107 aa)). Low complexity predominate over residues 62 to 107 (ITTTTTSTSTTNNNNITTTSTSSQQSNGTLSSSSSPTIQSIPTTPI). Residues 130 to 450 (LREKDELSLI…KMRKQMADLK (321 aa)) adopt a coiled-coil conformation. Residues 132-515 (EKDELSLIHN…ELVKGFEKTV (384 aa)) form the IF rod domain. The short motif at 519–522 (KRKR) is the Nuclear localization signal element. A disordered region spans residues 519–584 (KRKRSKLQHE…PTGPEQSELF (66 aa)). The span at 532-545 (AANQDQNGMTIEEQ) shows a compositional bias: polar residues. Low complexity predominate over residues 546–564 (SSTSTTTTTSATGSSSSTS). Residues 565 to 584 (HLDNIDSSKLPTGPEQSELF) are compositionally biased toward polar residues. The 124-residue stretch at 575-698 (PTGPEQSELF…EETTTVTLPA (124 aa)) folds into the LTD domain. The short motif at 713–716 (CLIM) is the CAAX motif element.

It belongs to the intermediate filament family. As to quaternary structure, homodimer. Lamin dimers then assemble into dimeric head-to-tail polymers. Ultimately, two head-to-tail polymers assemble laterally into a protofilament with a uniformly shaped rod of 3.5 nm in diameter.

It localises to the nucleus lamina. Its subcellular location is the nucleus envelope. The protein localises to the nucleus inner membrane. In terms of biological role, lamins are intermediate filament proteins that assemble into a filamentous meshwork, and which constitute the major components of the nuclear lamina, a fibrous layer on the nucleoplasmic side of the inner nuclear membrane. Lamins provide a framework for the nuclear envelope, bridging the nuclear envelope and chromatin, thereby playing an important role in nuclear assembly, chromatin organization, nuclear membrane and telomere dynamics. The structural integrity of the lamina is strictly controlled by the cell cycle, as seen by the disintegration and formation of the nuclear envelope in prophase and telophase, respectively. Helps to maintain integrity of nuclear structures in response to mechanical stress. The protein is Lamin-like protein of Dictyostelium discoideum (Social amoeba).